Here is a 218-residue protein sequence, read N- to C-terminus: Adenylate kinase (218 aa).

ATP is bound at residue 10 to 15 (GAGKGT). Residues 30–59 (STGDMLRAAIAKGTPLGLSAQKIMESGGLV) form an NMP region. AMP-binding positions include threonine 31, arginine 36, 57–59 (GLV), 85–88 (GFPR), and glutamine 92. The tract at residues 122–159 (GRRIHQPSGRVYHVVNQPPKNPGVDDITGEPLIQRDDD) is LID. ATP is bound by residues arginine 123 and 132–133 (VY). Residues arginine 156 and arginine 167 each coordinate AMP. Glycine 203 contacts ATP.

This sequence belongs to the adenylate kinase family. As to quaternary structure, monomer.

The protein localises to the cytoplasm. It catalyses the reaction AMP + ATP = 2 ADP. It participates in purine metabolism; AMP biosynthesis via salvage pathway; AMP from ADP: step 1/1. Catalyzes the reversible transfer of the terminal phosphate group between ATP and AMP. Plays an important role in cellular energy homeostasis and in adenine nucleotide metabolism. The chain is Adenylate kinase from Legionella pneumophila (strain Corby).